Here is a 1676-residue protein sequence, read N- to C-terminus: Protein TIC 214 (1676 aa).

The next 6 membrane-spanning stretches (helical) occupy residues 24-44 (KIIN…ALAL), 70-90 (LILG…YIAF), 93-113 (PYTL…GNNL), 130-150 (LEIL…TCIF), 170-190 (MVFL…VLMC), and 218-238 (FFLV…IQSL). Basic and acidic residues-rich tracts occupy residues 264 to 276 (LKKS…GKST) and 283 to 298 (SHEK…SKLE). Disordered regions lie at residues 264-302 (LKKS…NEDE), 546-610 (LVVF…SYSI), 1123-1151 (NKQS…NLIL), and 1372-1436 (QQQN…SEDD). The span at 562–586 (DSGNIQNKSSDKTINPQNNLTNSKT) shows a compositional bias: polar residues. Residues 597–610 (TTEKEPKDDKSYSI) show a composition bias toward basic and acidic residues. Polar residues predominate over residues 1123–1138 (NKQSLQKGNSKGNSNL). Positions 1372–1390 (QQQNQTTTKINTETKNQQK) are enriched in low complexity. Positions 1384 to 1436 (ETKNQQKNRVENEENKETENQQNAETKNKQKSKTENEENKETENQQNDESEDD) form a coiled coil. 2 stretches are compositionally biased toward basic and acidic residues: residues 1391–1402 (NRVENEENKETE) and 1409–1426 (TKNK…KETE).

Belongs to the TIC214 family. As to quaternary structure, part of the Tic complex.

The protein localises to the plastid. Its subcellular location is the chloroplast inner membrane. In terms of biological role, involved in protein precursor import into chloroplasts. May be part of an intermediate translocation complex acting as a protein-conducting channel at the inner envelope. The sequence is that of Protein TIC 214 from Cuscuta obtusiflora (Peruvian dodder).